Here is an 874-residue protein sequence, read N- to C-terminus: Alanine--tRNA ligase (874 aa).

The Zn(2+) site is built by His562, His566, Cys665, and His669.

It belongs to the class-II aminoacyl-tRNA synthetase family. Zn(2+) is required as a cofactor.

Its subcellular location is the cytoplasm. It carries out the reaction tRNA(Ala) + L-alanine + ATP = L-alanyl-tRNA(Ala) + AMP + diphosphate. In terms of biological role, catalyzes the attachment of alanine to tRNA(Ala) in a two-step reaction: alanine is first activated by ATP to form Ala-AMP and then transferred to the acceptor end of tRNA(Ala). Also edits incorrectly charged Ser-tRNA(Ala) and Gly-tRNA(Ala) via its editing domain. The chain is Alanine--tRNA ligase from Pseudomonas paraeruginosa (strain DSM 24068 / PA7) (Pseudomonas aeruginosa (strain PA7)).